The primary structure comprises 62 residues: UPF0434 protein FTM_0733 (62 aa).

This sequence belongs to the UPF0434 family.

This chain is UPF0434 protein FTM_0733, found in Francisella tularensis subsp. mediasiatica (strain FSC147).